Reading from the N-terminus, the 303-residue chain is tRNA dimethylallyltransferase (303 aa).

11–18 (GPTGVGKS) lines the ATP pocket. 13 to 18 (TGVGKS) lines the substrate pocket. Interaction with substrate tRNA stretches follow at residues 36–39 (DSRQ) and 159–163 (QRVLR).

The protein belongs to the IPP transferase family. As to quaternary structure, monomer. Requires Mg(2+) as cofactor.

The enzyme catalyses adenosine(37) in tRNA + dimethylallyl diphosphate = N(6)-dimethylallyladenosine(37) in tRNA + diphosphate. Functionally, catalyzes the transfer of a dimethylallyl group onto the adenine at position 37 in tRNAs that read codons beginning with uridine, leading to the formation of N6-(dimethylallyl)adenosine (i(6)A). This Lawsonia intracellularis (strain PHE/MN1-00) protein is tRNA dimethylallyltransferase.